Here is a 146-residue protein sequence, read N- to C-terminus: Hemoglobin subunit beta (146 aa).

Valine 1 is subject to N-acetylvaline. Positions 2–146 (HLTGEEKSAV…VANALAHKYH (145 aa)) constitute a Globin domain. Threonine 12 bears the Phosphothreonine mark. Serine 44 carries the phosphoserine modification. Lysine 59 bears the N6-acetyllysine mark. Heme b is bound at residue histidine 63. Residue lysine 82 is modified to N6-acetyllysine. Histidine 92 provides a ligand contact to heme b. Cysteine 93 carries the post-translational modification S-nitrosocysteine. An N6-acetyllysine modification is found at lysine 144.

This sequence belongs to the globin family. In terms of assembly, heterotetramer of two alpha chains and two beta chains. Red blood cells.

In terms of biological role, involved in oxygen transport from the lung to the various peripheral tissues. The protein is Hemoglobin subunit beta (HBB) of Saguinus oedipus (Cotton-top tamarin).